We begin with the raw amino-acid sequence, 349 residues long: D-alanine--D-alanine ligase (349 aa).

One can recognise an ATP-grasp domain in the interval 132-335 (KHVFEAVGVP…YSDLIEKLVD (204 aa)). 162–217 (VEKLEFPVFVKPANMGSSVGISKVDDLADLQPALSEAYKYDNRVVIEQGVDAREIE) is a binding site for ATP. The Mg(2+) site is built by D289, E302, and N304.

This sequence belongs to the D-alanine--D-alanine ligase family. Mg(2+) serves as cofactor. Mn(2+) is required as a cofactor.

It is found in the cytoplasm. It catalyses the reaction 2 D-alanine + ATP = D-alanyl-D-alanine + ADP + phosphate + H(+). Its pathway is cell wall biogenesis; peptidoglycan biosynthesis. Functionally, cell wall formation. The chain is D-alanine--D-alanine ligase from Lactococcus lactis subsp. cremoris (strain SK11).